A 183-amino-acid chain; its full sequence is 2-C-methyl-D-erythritol 2,4-cyclodiphosphate synthase (183 aa).

Residues aspartate 8 and histidine 10 each contribute to the a divalent metal cation site. Residues 8 to 10 (DVH) and 34 to 35 (HS) contribute to the 4-CDP-2-C-methyl-D-erythritol 2-phosphate site. Histidine 42 is a binding site for a divalent metal cation. Residues 56 to 58 (DIG), 61 to 65 (FPDTD), 132 to 135 (TTEE), and phenylalanine 139 contribute to the 4-CDP-2-C-methyl-D-erythritol 2-phosphate site.

The protein belongs to the IspF family. Homotrimer. The cofactor is a divalent metal cation.

The enzyme catalyses 4-CDP-2-C-methyl-D-erythritol 2-phosphate = 2-C-methyl-D-erythritol 2,4-cyclic diphosphate + CMP. It participates in isoprenoid biosynthesis; isopentenyl diphosphate biosynthesis via DXP pathway; isopentenyl diphosphate from 1-deoxy-D-xylulose 5-phosphate: step 4/6. Functionally, involved in the biosynthesis of isopentenyl diphosphate (IPP) and dimethylallyl diphosphate (DMAPP), two major building blocks of isoprenoid compounds. Catalyzes the conversion of 4-diphosphocytidyl-2-C-methyl-D-erythritol 2-phosphate (CDP-ME2P) to 2-C-methyl-D-erythritol 2,4-cyclodiphosphate (ME-CPP) with a corresponding release of cytidine 5-monophosphate (CMP). This Lachnospira eligens (strain ATCC 27750 / DSM 3376 / VPI C15-48 / C15-B4) (Eubacterium eligens) protein is 2-C-methyl-D-erythritol 2,4-cyclodiphosphate synthase.